Here is a 947-residue protein sequence, read N- to C-terminus: Bifunctional glutamine synthetase adenylyltransferase/adenylyl-removing enzyme (947 aa).

Residues 1-440 form an adenylyl removase region; sequence MTPLSSPLSQ…VFNELIGDDE (440 aa). The tract at residues 450 to 947 is adenylyl transferase; sequence SEPWREVWQD…ASWRKWLVAV (498 aa).

The protein belongs to the GlnE family. It depends on Mg(2+) as a cofactor.

It catalyses the reaction [glutamine synthetase]-O(4)-(5'-adenylyl)-L-tyrosine + phosphate = [glutamine synthetase]-L-tyrosine + ADP. It carries out the reaction [glutamine synthetase]-L-tyrosine + ATP = [glutamine synthetase]-O(4)-(5'-adenylyl)-L-tyrosine + diphosphate. Involved in the regulation of glutamine synthetase GlnA, a key enzyme in the process to assimilate ammonia. When cellular nitrogen levels are high, the C-terminal adenylyl transferase (AT) inactivates GlnA by covalent transfer of an adenylyl group from ATP to specific tyrosine residue of GlnA, thus reducing its activity. Conversely, when nitrogen levels are low, the N-terminal adenylyl removase (AR) activates GlnA by removing the adenylyl group by phosphorolysis, increasing its activity. The regulatory region of GlnE binds the signal transduction protein PII (GlnB) which indicates the nitrogen status of the cell. The sequence is that of Bifunctional glutamine synthetase adenylyltransferase/adenylyl-removing enzyme from Salmonella enteritidis PT4 (strain P125109).